Reading from the N-terminus, the 116-residue chain is Ferredoxin-like protein in nif region (116 aa).

Positions 2 to 29 constitute a 4Fe-4S ferredoxin-type domain; sequence AYTITSQCISCKLCSSVCPTGAIKVAED. Residues C9, C12, C15, and C19 each contribute to the iron-sulfur cluster site.

The protein is Ferredoxin-like protein in nif region (fdxN) of Trichormus azollae (Anabaena azollae).